Consider the following 347-residue polypeptide: UDP-N-acetylenolpyruvoylglucosamine reductase (347 aa).

Residues 33–221 (AGGSAERIYL…SGAWFALPRD (189 aa)) form the FAD-binding PCMH-type domain. Arginine 180 is a catalytic residue. The active-site Proton donor is serine 250. Glutamate 320 is an active-site residue.

Belongs to the MurB family. It depends on FAD as a cofactor.

The protein resides in the cytoplasm. The catalysed reaction is UDP-N-acetyl-alpha-D-muramate + NADP(+) = UDP-N-acetyl-3-O-(1-carboxyvinyl)-alpha-D-glucosamine + NADPH + H(+). It functions in the pathway cell wall biogenesis; peptidoglycan biosynthesis. In terms of biological role, cell wall formation. The sequence is that of UDP-N-acetylenolpyruvoylglucosamine reductase from Nitrosospira multiformis (strain ATCC 25196 / NCIMB 11849 / C 71).